The chain runs to 879 residues: Alanine--tRNA ligase (879 aa).

4 residues coordinate Zn(2+): His566, His570, Cys668, and His672.

Belongs to the class-II aminoacyl-tRNA synthetase family. Zn(2+) is required as a cofactor.

It localises to the cytoplasm. The catalysed reaction is tRNA(Ala) + L-alanine + ATP = L-alanyl-tRNA(Ala) + AMP + diphosphate. Functionally, catalyzes the attachment of alanine to tRNA(Ala) in a two-step reaction: alanine is first activated by ATP to form Ala-AMP and then transferred to the acceptor end of tRNA(Ala). Also edits incorrectly charged Ser-tRNA(Ala) and Gly-tRNA(Ala) via its editing domain. The protein is Alanine--tRNA ligase of Halalkalibacterium halodurans (strain ATCC BAA-125 / DSM 18197 / FERM 7344 / JCM 9153 / C-125) (Bacillus halodurans).